Consider the following 1083-residue polypeptide: FACT complex subunit spt16 (1083 aa).

Ser-437 carries the phosphoserine modification. Residues Leu-466–Asn-504 are a coiled coil. Residues Phe-923–His-1083 are disordered. Residues Ser-935–Glu-987 show a composition bias toward acidic residues. Basic and acidic residues predominate over residues Glu-988–Lys-1023. The segment covering Lys-1024–Pro-1033 has biased composition (basic residues). The span at Ser-1058–His-1076 shows a compositional bias: basic and acidic residues.

This sequence belongs to the peptidase M24 family. SPT16 subfamily. In terms of assembly, component of the FACT complex, a stable heterodimer of dre4/spt16 and Ssrp. Interacts with TRL/GAGA.

Its subcellular location is the nucleus. The protein resides in the chromosome. Functionally, component of the FACT complex, a general chromatin factor that acts to reorganize nucleosomes. The FACT complex is involved in multiple processes that require DNA as a template such as mRNA elongation, DNA replication and DNA repair. During transcription elongation the FACT complex acts as a histone chaperone that both destabilizes and restores nucleosomal structure. It facilitates the passage of RNA polymerase II and transcription by promoting the dissociation of one histone H2A-H2B dimer from the nucleosome, then subsequently promotes the reestablishment of the nucleosome following the passage of RNA polymerase II. The FACT complex is required for expression of Hox genes. This is FACT complex subunit spt16 (dre4) from Drosophila melanogaster (Fruit fly).